The primary structure comprises 539 residues: O-phosphoserine--tRNA(Cys) ligase (539 aa).

Substrate-binding positions include 188 to 190, 233 to 235, 275 to 276, and N319; these read HMT, SAS, and YY.

This sequence belongs to the class-II aminoacyl-tRNA synthetase family. O-phosphoseryl-tRNA(Cys) synthetase subfamily. Homotetramer. Interacts with SepCysS.

It carries out the reaction tRNA(Cys) + O-phospho-L-serine + ATP = O-phospho-L-seryl-tRNA(Cys) + AMP + diphosphate. In terms of biological role, catalyzes the attachment of O-phosphoserine (Sep) to tRNA(Cys). In Methanocaldococcus jannaschii (strain ATCC 43067 / DSM 2661 / JAL-1 / JCM 10045 / NBRC 100440) (Methanococcus jannaschii), this protein is O-phosphoserine--tRNA(Cys) ligase (sepS).